A 194-amino-acid chain; its full sequence is Fe/S biogenesis protein NfuA (194 aa).

2 residues coordinate [4Fe-4S] cluster: Cys-151 and Cys-154.

This sequence belongs to the NfuA family. Homodimer. The cofactor is [4Fe-4S] cluster.

In terms of biological role, involved in iron-sulfur cluster biogenesis. Binds a 4Fe-4S cluster, can transfer this cluster to apoproteins, and thereby intervenes in the maturation of Fe/S proteins. Could also act as a scaffold/chaperone for damaged Fe/S proteins. The chain is Fe/S biogenesis protein NfuA from Aliivibrio salmonicida (strain LFI1238) (Vibrio salmonicida (strain LFI1238)).